Reading from the N-terminus, the 186-residue chain is NADH-quinone oxidoreductase subunit C (186 aa).

Residues 166-186 (DSLTPWKGVGRPSDPFDGRKE) form a disordered region.

Belongs to the complex I 30 kDa subunit family. In terms of assembly, NDH-1 is composed of 14 different subunits. Subunits NuoB, C, D, E, F, and G constitute the peripheral sector of the complex.

The protein resides in the cell inner membrane. It carries out the reaction a quinone + NADH + 5 H(+)(in) = a quinol + NAD(+) + 4 H(+)(out). In terms of biological role, NDH-1 shuttles electrons from NADH, via FMN and iron-sulfur (Fe-S) centers, to quinones in the respiratory chain. The immediate electron acceptor for the enzyme in this species is believed to be ubiquinone. Couples the redox reaction to proton translocation (for every two electrons transferred, four hydrogen ions are translocated across the cytoplasmic membrane), and thus conserves the redox energy in a proton gradient. This Neorickettsia sennetsu (strain ATCC VR-367 / Miyayama) (Ehrlichia sennetsu) protein is NADH-quinone oxidoreductase subunit C.